A 417-amino-acid chain; its full sequence is Acetate kinase (417 aa).

Position 9 (Asn-9) interacts with Mg(2+). Position 16 (Lys-16) interacts with ATP. Arg-90 is a substrate binding site. Asp-147 functions as the Proton donor/acceptor in the catalytic mechanism. Residues 207 to 211 (HIGNG), 282 to 284 (DLR), and 330 to 334 (GIGEN) contribute to the ATP site. A Mg(2+)-binding site is contributed by Glu-384.

It belongs to the acetokinase family. As to quaternary structure, homodimer. Mg(2+) is required as a cofactor. The cofactor is Mn(2+).

The protein localises to the cytoplasm. It catalyses the reaction acetate + ATP = acetyl phosphate + ADP. The protein operates within metabolic intermediate biosynthesis; acetyl-CoA biosynthesis; acetyl-CoA from acetate: step 1/2. Its function is as follows. Catalyzes the formation of acetyl phosphate from acetate and ATP. Can also catalyze the reverse reaction. This chain is Acetate kinase, found in Staphylococcus epidermidis (strain ATCC 35984 / DSM 28319 / BCRC 17069 / CCUG 31568 / BM 3577 / RP62A).